The following is a 390-amino-acid chain: Fluoride export protein 1 (390 aa).

The disordered stretch occupies residues 1 to 22; the sequence is MVAPLVSESQSSSIEETDEQQQ. Topologically, residues 1 to 72 are cytoplasmic; sequence MVAPLVSESQ…RFLDKTQKYY (72 aa). The helical transmembrane segment at 73 to 93 threads the bilayer; the sequence is PVILNIVHGAIWGVLVRKGLM. At 94-100 the chain is on the extracellular side; it reads SLTTYSG. A helical transmembrane segment spans residues 101–121; that stretch reads SFLSGVIWANFAACVVMGLAI. At 122-143 the chain is on the cytoplasmic side; that stretch reads DGEVFWIRLLEEKDYPNKGAIP. The chain crosses the membrane as a helical span at residues 144 to 164; the sequence is VYTGLTTGFCGTVSSFSSVIL. Residues 165–185 lie on the Extracellular side of the membrane; that stretch reads EAFNKAADTDIGVRHHYPNGA. A helical membrane pass occupies residues 186–206; sequence YGIMQFLAVILAQFGLSIMGF. At 207 to 229 the chain is on the cytoplasmic side; that stretch reads HMGKQFSAVVDNYLPLVTKRIYK. The helical transmembrane segment at 230-250 threads the bilayer; it reads VLELTSMILGVVLVVITCILI. Over 251-256 the chain is Extracellular; it reads GVKKQG. The helical transmembrane segment at 257 to 279 threads the bilayer; the sequence is SWRSWTFSMLFAPFGALLRYYLS. Residues 280 to 290 lie on the Cytoplasmic side of the membrane; that stretch reads KFLNNKVSNFP. The helical transmembrane segment at 291-311 threads the bilayer; the sequence is LGTFTANFLGTLLLAVFTLLA. The Extracellular portion of the chain corresponds to 312–338; the sequence is RGKLPGGKGHIVTNTIALHVLEGLDDG. Residues 339–359 traverse the membrane as a helical segment; it reads FCGGLTTVSTFVVELFGLKTL. At 360–368 the chain is on the cytoplasmic side; sequence FSYRYGTIS. A helical membrane pass occupies residues 369–389; the sequence is ILVCFAGVVLILGSYNWSVGL. Position 390 (Asp-390) is a topological domain, extracellular.

Belongs to the fluoride channel Fluc/FEX (TC 1.A.43) family.

It is found in the cell membrane. The enzyme catalyses fluoride(in) = fluoride(out). Functionally, fluoride channel required for the rapid expulsion of cytoplasmic fluoride. This is Fluoride export protein 1 from Candida albicans (strain SC5314 / ATCC MYA-2876) (Yeast).